A 971-amino-acid polypeptide reads, in one-letter code: Endoplasmic reticulum calcium ATPase srcA (971 aa).

Residues 1-25 (MNNEALAEDPPTPLWELVLEQFKDQ) are Cytoplasmic-facing. Residues 26 to 46 (LVLILLGSAAVSFVLALFEEG) traverse the membrane as a helical segment. The Lumenal segment spans residues 47–49 (DDW). Residues 50-70 (TAFVDPVVILTILILNAVVGV) form a helical membrane-spanning segment. The Cytoplasmic portion of the chain corresponds to 71–217 (TQESSAEKAI…PTPLKQKLND (147 aa)). A helical membrane pass occupies residues 218 to 238 (FGDMLAKVITVICVLVWLINV). The Lumenal portion of the chain corresponds to 239–262 (EHFNDPAHGGWAKGAIYYLKIAVS). Residues 263–283 (LGVAAIPEGLAVVITTCLALG) form a helical membrane-spanning segment. 4 residues coordinate Ca(2+): V265, A266, I268, and E270. At 284–718 (TRKMAAKNAV…GRSIYSNTQQ (435 aa)) the chain is on the cytoplasmic side. D312 serves as the catalytic 4-aspartylphosphate intermediate. Positions 312 and 314 each coordinate Mg(2+). ATP contacts are provided by T314, E402, R453, K473, R518, R637, and K643. D662 is a binding site for Mg(2+). N665 is an ATP binding site. The chain crosses the membrane as a helical span at residues 719–741 (FIRYLISSNIGEVVSIFLTAALG). The Ca(2+) site is built by N727 and E730. Over 742–750 (MPEALIPVQ) the chain is Lumenal. A helical transmembrane segment spans residues 751-770 (LLWVNLVTDGLPATALSFNP). Residues N755, T758, and D759 each contribute to the Ca(2+) site. The Cytoplasmic portion of the chain corresponds to 771-795 (PDHDVMRRAPRKRDEPLVGGWLLFR). The chain crosses the membrane as a helical span at residues 796–816 (YLAIGTYVGAATVFGYIWWFV). The Lumenal portion of the chain corresponds to 817 to 854 (YNPEGPQISFWQLSHFHKCSAQFPEIGCEMFSNEMSRS). The helical transmembrane segment at 855–875 (ASTVSLSILVVIEMLNAMNAL) threads the bilayer. A Ca(2+)-binding site is contributed by E867. Residues 876–891 (SSSESLLAFPLWNNMM) lie on the Cytoplasmic side of the membrane. The chain crosses the membrane as a helical span at residues 892-912 (LVYAIILSMTLHFAILYIPFL). Over 913–917 (QTLFS) the chain is Lumenal. A helical transmembrane segment spans residues 918–938 (ILPLNWTEWKAVLAISAPVVA). Residues 939–971 (IDELLKYAERRLYTLPAIAGEQQNGVAFKPKKA) are Cytoplasmic-facing.

It belongs to the cation transport ATPase (P-type) (TC 3.A.3) family. It depends on Mg(2+) as a cofactor.

Its subcellular location is the endoplasmic reticulum membrane. It carries out the reaction Ca(2+)(in) + ATP + H2O = Ca(2+)(out) + ADP + phosphate + H(+). Its function is as follows. Magnesium-dependent enzyme catalyzes the hydrolysis of ATP coupled with the translocation of calcium from the cytosol to the endoplasmic reticulum lumen. Its activity is coupled to the unfolded protein response (UPR) and Ca(2+) import into the endoplasmioc reticulum is important for redox homeostasis, virulence, cell wall biosynthesis, and resistance to antifungal compounds that inhibit Ca2+ signaling. With pmrA, promotes radial growth and conidiation. The chain is Endoplasmic reticulum calcium ATPase srcA (srcA) from Aspergillus fumigatus (strain ATCC MYA-4609 / CBS 101355 / FGSC A1100 / Af293) (Neosartorya fumigata).